A 520-amino-acid polypeptide reads, in one-letter code: GMP synthase [glutamine-hydrolyzing] (520 aa).

Residues 8 to 202 form the Glutamine amidotransferase type-1 domain; it reads RLLIIDFGSQ…FVRLAGFSGD (195 aa). Catalysis depends on Cys86, which acts as the Nucleophile. Active-site residues include His177 and Glu179. Residues 203–395 form the GMPS ATP-PPase domain; the sequence is WTMGAYREQM…LGLPDSFIGR (193 aa). 230 to 236 lines the ATP pocket; it reads SGGVDSS.

Homodimer.

It carries out the reaction XMP + L-glutamine + ATP + H2O = GMP + L-glutamate + AMP + diphosphate + 2 H(+). Its pathway is purine metabolism; GMP biosynthesis; GMP from XMP (L-Gln route): step 1/1. In terms of biological role, catalyzes the synthesis of GMP from XMP. This Ruegeria sp. (strain TM1040) (Silicibacter sp.) protein is GMP synthase [glutamine-hydrolyzing].